Consider the following 367-residue polypeptide: MKILSLRLKNFRNYKEAEVSLSPDMNYIFGENAQGKTNLLEALYVLSLGRSFRTTHLTEAIFFGSSHFFLEMTFEKDGFCHTLSTYVDKQGKKILCDHSPIKTLSQLIGMVPIVLFSSKDRSLISGAPADRRLFLNLLLSQCDPQYKHTLSYYHRALLQRNTLLKTKQTSTLSVWDEQLATLGAYLTVSRYFCCEQLNQLVQELWSNSLSEQLRIKFKSSLIKQGNLSQEAIIEELRKQLTTALHRDLELGTTSVGPHREDFTLMINDLSVAQFSSEGQKHSLLAILRLAECLYIKNIYNACPLFCMDDIHAGLDNHRISQLLDLAPTLGQTLMTSTNIPHQSLSETSKIFSVNQAQISIHSHLIVN.

Position 30–37 (30–37 (GENAQGKT)) interacts with ATP.

This sequence belongs to the RecF family.

It localises to the cytoplasm. Functionally, the RecF protein is involved in DNA metabolism; it is required for DNA replication and normal SOS inducibility. RecF binds preferentially to single-stranded, linear DNA. It also seems to bind ATP. In Chlamydia caviae (strain ATCC VR-813 / DSM 19441 / 03DC25 / GPIC) (Chlamydophila caviae), this protein is DNA replication and repair protein RecF.